Here is a 291-residue protein sequence, read N- to C-terminus: Pyridoxal 5'-phosphate synthase subunit PdxS (291 aa).

Asp-23 serves as a coordination point for D-ribose 5-phosphate. Lys-80 acts as the Schiff-base intermediate with D-ribose 5-phosphate in catalysis. Residue Gly-152 participates in D-ribose 5-phosphate binding. Arg-164 provides a ligand contact to D-glyceraldehyde 3-phosphate. D-ribose 5-phosphate-binding positions include Gly-213 and 234-235; that span reads GS.

This sequence belongs to the PdxS/SNZ family. In the presence of PdxT, forms a dodecamer of heterodimers.

It catalyses the reaction aldehydo-D-ribose 5-phosphate + D-glyceraldehyde 3-phosphate + L-glutamine = pyridoxal 5'-phosphate + L-glutamate + phosphate + 3 H2O + H(+). It participates in cofactor biosynthesis; pyridoxal 5'-phosphate biosynthesis. Functionally, catalyzes the formation of pyridoxal 5'-phosphate from ribose 5-phosphate (RBP), glyceraldehyde 3-phosphate (G3P) and ammonia. The ammonia is provided by the PdxT subunit. Can also use ribulose 5-phosphate and dihydroxyacetone phosphate as substrates, resulting from enzyme-catalyzed isomerization of RBP and G3P, respectively. This is Pyridoxal 5'-phosphate synthase subunit PdxS from Streptococcus pneumoniae (strain P1031).